The primary structure comprises 256 residues: MIVCIDIGNSHIFGGVFVGDQIKHNFRYPSTTPCTSDTLGIFLLSFFERKKLDIEDIEAVVLSSVVLHLEYSVNSACKKYLGITPLELKPGVKTGLKLDIKNPLDLGADRVANSVAAISLFPSRNIIVVDFGTATTICAISENKTYIGGAILPGINLSMESLSQKTAKLSNVTISHPSSALGKTTISQIQSGLIYGQLGAIKEIINRISQENFIDKPPILIATGGYAHIFEKEQYFDVIISDLLLHGLRIIWQMNK.

ATP is bound at residue 6-13 (DIGNSHIF). 107–110 (GADR) provides a ligand contact to substrate. Asp109 serves as the catalytic Proton acceptor. Position 130 (Asp130) interacts with K(+). Thr133 lines the ATP pocket. A substrate-binding site is contributed by Thr185.

The protein belongs to the type III pantothenate kinase family. In terms of assembly, homodimer. The cofactor is NH4(+). It depends on K(+) as a cofactor.

The protein localises to the cytoplasm. It catalyses the reaction (R)-pantothenate + ATP = (R)-4'-phosphopantothenate + ADP + H(+). Its pathway is cofactor biosynthesis; coenzyme A biosynthesis; CoA from (R)-pantothenate: step 1/5. In terms of biological role, catalyzes the phosphorylation of pantothenate (Pan), the first step in CoA biosynthesis. The polypeptide is Type III pantothenate kinase 1 (Francisella tularensis subsp. holarctica (strain LVS)).